The chain runs to 338 residues: MKVSYDKDCDLSIIQGKKVAIIGYGSQGHAHACNLKDSGVDVTVGLRPGSSSIAKAEAHGLKVSDVPAAVAAADLVMILTPDEFQGRLYKDEVEPNLKQGATLAFAHGFSIHYNQVVPRADLDVIMIAPKAPGHTVRSEFVKGGGIPDLIAIYQDASGNARNVALSYACGVGGGRTGIIETTFKDETETDLFGEQAVLCGGCVELVKAGFETLVEAGYAPEMAYFECLHELKLIVDLMFEGGIANMNYSISNNAEYGEYVTGPEVINAESRAAMRNALKRIQDGEYAKMFITEGAANYPSMTAYRRNNAAHGIEVVGEKLRAMMPWIAANKIVDKSKN.

Positions Met1–Thr181 constitute a KARI N-terminal Rossmann domain. NADP(+) contacts are provided by residues Tyr24–Gln27, Arg47, Ser50, Ser52, and Asp82–Gln85. His107 is an active-site residue. Gly133 contributes to the NADP(+) binding site. A KARI C-terminal knotted domain is found at Thr182–Ile327. The Mg(2+) site is built by Asp190, Glu194, Glu226, and Glu230. Ser251 contributes to the substrate binding site.

Belongs to the ketol-acid reductoisomerase family. Mg(2+) is required as a cofactor.

The catalysed reaction is (2R)-2,3-dihydroxy-3-methylbutanoate + NADP(+) = (2S)-2-acetolactate + NADPH + H(+). It catalyses the reaction (2R,3R)-2,3-dihydroxy-3-methylpentanoate + NADP(+) = (S)-2-ethyl-2-hydroxy-3-oxobutanoate + NADPH + H(+). It functions in the pathway amino-acid biosynthesis; L-isoleucine biosynthesis; L-isoleucine from 2-oxobutanoate: step 2/4. The protein operates within amino-acid biosynthesis; L-valine biosynthesis; L-valine from pyruvate: step 2/4. Involved in the biosynthesis of branched-chain amino acids (BCAA). Catalyzes an alkyl-migration followed by a ketol-acid reduction of (S)-2-acetolactate (S2AL) to yield (R)-2,3-dihydroxy-isovalerate. In the isomerase reaction, S2AL is rearranged via a Mg-dependent methyl migration to produce 3-hydroxy-3-methyl-2-ketobutyrate (HMKB). In the reductase reaction, this 2-ketoacid undergoes a metal-dependent reduction by NADPH to yield (R)-2,3-dihydroxy-isovalerate. In Stutzerimonas stutzeri (strain A1501) (Pseudomonas stutzeri), this protein is Ketol-acid reductoisomerase (NADP(+)).